Consider the following 305-residue polypeptide: MKHLLGLRELSKEDIIKILNLAKDMKTILKSETKKTPHLQGYSVVTLFYENSTRTRTSFELAAKFMSANTTSISVQTSSVQKGESLLDTVKTLEALKTDVLIVRHAVSGVPHFIAKNCSFSVINAGDGMNEHPTQALLDMFTIRERLGTIERLKIAIIGDIFHSRVARSNIWGLSKFDNQITVFGPQTLIPPYIENFAYVASSLEEAVSGKDVVIDLRIQLERQKRGFITSKQEYYKFYGLNEDIMRYISGSTLIMHPGPVNRGVEISSEVLQLPNSTIDEQVTNGIAVRMAVLYLCTRKEGIYR.

Residues Arg-54 and Thr-55 each coordinate carbamoyl phosphate. Lys-82 contacts L-aspartate. Carbamoyl phosphate contacts are provided by Arg-104, His-132, and Gln-135. Residues Arg-165 and Arg-218 each contribute to the L-aspartate site. Gly-259 and Pro-260 together coordinate carbamoyl phosphate.

This sequence belongs to the aspartate/ornithine carbamoyltransferase superfamily. ATCase family. In terms of assembly, heterododecamer (2C3:3R2) of six catalytic PyrB chains organized as two trimers (C3), and six regulatory PyrI chains organized as three dimers (R2).

It carries out the reaction carbamoyl phosphate + L-aspartate = N-carbamoyl-L-aspartate + phosphate + H(+). It participates in pyrimidine metabolism; UMP biosynthesis via de novo pathway; (S)-dihydroorotate from bicarbonate: step 2/3. In terms of biological role, catalyzes the condensation of carbamoyl phosphate and aspartate to form carbamoyl aspartate and inorganic phosphate, the committed step in the de novo pyrimidine nucleotide biosynthesis pathway. This is Aspartate carbamoyltransferase catalytic subunit from Caldicellulosiruptor bescii (strain ATCC BAA-1888 / DSM 6725 / KCTC 15123 / Z-1320) (Anaerocellum thermophilum).